The chain runs to 287 residues: ATP synthase gamma chain (287 aa).

This sequence belongs to the ATPase gamma chain family. As to quaternary structure, F-type ATPases have 2 components, CF(1) - the catalytic core - and CF(0) - the membrane proton channel. CF(1) has five subunits: alpha(3), beta(3), gamma(1), delta(1), epsilon(1). CF(0) has three main subunits: a, b and c.

The protein resides in the cell inner membrane. Produces ATP from ADP in the presence of a proton gradient across the membrane. The gamma chain is believed to be important in regulating ATPase activity and the flow of protons through the CF(0) complex. The chain is ATP synthase gamma chain from Cronobacter sakazakii (strain ATCC BAA-894) (Enterobacter sakazakii).